The primary structure comprises 459 residues: 5-hydroxytryptamine receptor 2C (459 aa).

The signal sequence occupies residues 1-32 (MVNLGTAVRSLLVHLIGLLVWQFDISISPVAA). The Extracellular portion of the chain corresponds to 33 to 56 (IVTDTFNSSDGGRLFQFPDGVQNW). A helical membrane pass occupies residues 57–81 (PALSIVVIIIMTIGGNILVIMAVSM). Residues 82–87 (EKKLHN) are Cytoplasmic-facing. Residues 88–112 (ATNYFLMSLAIADMLVGLLVMPLSL) form a helical membrane-spanning segment. Topologically, residues 113–129 (LAILYDYVWPLPRYLCP) are extracellular. The cysteines at positions 128 and 208 are disulfide-linked. The chain crosses the membrane as a helical span at residues 130 to 152 (VWISLDVLFSTASIMHLCAISLD). Threonine 140 provides a ligand contact to ergotamine. The DRY motif; important for ligand-induced conformation changes motif lies at 152 to 154 (DRY). Residues 153 to 168 (RYVAIRNPIEHSRFNS) are Cytoplasmic-facing. A helical transmembrane segment spans residues 169-190 (RTKAIMKIAIVWAISIGVSVPI). The Extracellular portion of the chain corresponds to 191–214 (PVIGLRDESKVFVNNTTCVLNDPN). N-linked (GlcNAc...) asparagine glycosylation is found at asparagine 204 and asparagine 205. Leucine 210 serves as a coordination point for ergotamine. Residues 215 to 237 (FVLIGSFVAFFIPLTIMVITYFL) traverse the membrane as a helical segment. Residues 238 to 312 (TIYVLRRQTL…AINNEKKASK (75 aa)) are Cytoplasmic-facing. The tract at residues 274–302 (DEEENAPNPNPDQKPRRKKKEKRPRGTMQ) is disordered. Positions 288–298 (PRRKKKEKRPR) are enriched in basic residues. The helical transmembrane segment at 313-337 (VLGIVFFVFLIMWCPFFITNILSVL) threads the bilayer. An intrachain disulfide couples cysteine 338 to cysteine 342. Residues 338–348 (CGKACNQKLME) lie on the Extracellular side of the membrane. Residues 349 to 371 (KLLNVFVWIGYVCSGINPLVYTL) form a helical membrane-spanning segment. An NPxxY motif; important for ligand-induced conformation changes and signaling motif is present at residues 365–369 (NPLVY). Residues 372 to 459 (FNKIYRRAFS…NVVSERISSV (88 aa)) lie on the Cytoplasmic side of the membrane. Positions 457–459 (SSV) match the PDZ-binding motif.

The protein belongs to the G-protein coupled receptor 1 family. Interacts with MPDZ. Interacts with ARRB2. Interacts with MPP3; this interaction stabilizes the receptor at the plasma membrane and prevents the desensitization of the HTR2C receptor-mediated calcium response. As to expression, detected in brain cortex, hypothalamus, brainstem and arcuate nucleus. Detected in the paraventricular nucleus of the hypothalamus.

Its subcellular location is the cell membrane. In terms of biological role, G-protein coupled receptor for 5-hydroxytryptamine (serotonin). Also functions as a receptor for various drugs and psychoactive substances, including ergot alkaloid derivatives, 1-2,5,-dimethoxy-4-iodophenyl-2-aminopropane (DOI) and lysergic acid diethylamide (LSD). Ligand binding causes a conformation change that triggers signaling via guanine nucleotide-binding proteins (G proteins) and modulates the activity of downstream effectors. HTR2C is coupled to G(q)/G(11) G alpha proteins and activates phospholipase C-beta, releasing diacylglycerol (DAG) and inositol 1,4,5-trisphosphate (IP3) second messengers that modulate the activity of phosphatidylinositol 3-kinase and promote the release of Ca(2+) ions from intracellular stores, respectively. Beta-arrestin family members inhibit signaling via G proteins and mediate activation of alternative signaling pathways. Regulates neuronal activity via the activation of short transient receptor potential calcium channels in the brain, and thereby modulates the activation of pro-opiomelanocortin neurons and the release of CRH that then regulates the release of corticosterone. Plays a role in the regulation of appetite and eating behavior, responses to anxiogenic stimuli and stress. Plays a role in insulin sensitivity and glucose homeostasis. This is 5-hydroxytryptamine receptor 2C from Mus musculus (Mouse).